Consider the following 180-residue polypeptide: Ribulose bisphosphate carboxylase small subunit, chloroplastic (180 aa).

The N-terminal 56 residues, 1–56 (MASSVLSSAAVATRSNVAQANMVAPFTGLKSAASFPVSRKQNLDITSIASNGGRVQ), are a transit peptide targeting the chloroplast.

Belongs to the RuBisCO small chain family. In terms of assembly, heterohexadecamer of 8 large and 8 small subunits.

It is found in the plastid. The protein localises to the chloroplast. In terms of biological role, ruBisCO catalyzes two reactions: the carboxylation of D-ribulose 1,5-bisphosphate, the primary event in carbon dioxide fixation, as well as the oxidative fragmentation of the pentose substrate. Both reactions occur simultaneously and in competition at the same active site. Although the small subunit is not catalytic it is essential for maximal activity. The chain is Ribulose bisphosphate carboxylase small subunit, chloroplastic from Nicotiana plumbaginifolia (Leadwort-leaved tobacco).